Reading from the N-terminus, the 321-residue chain is Methionyl-tRNA formyltransferase (321 aa).

A (6S)-5,6,7,8-tetrahydrofolate-binding site is contributed by 112–115; it reads SILP.

The protein belongs to the Fmt family.

The catalysed reaction is L-methionyl-tRNA(fMet) + (6R)-10-formyltetrahydrofolate = N-formyl-L-methionyl-tRNA(fMet) + (6S)-5,6,7,8-tetrahydrofolate + H(+). Functionally, attaches a formyl group to the free amino group of methionyl-tRNA(fMet). The formyl group appears to play a dual role in the initiator identity of N-formylmethionyl-tRNA by promoting its recognition by IF2 and preventing the misappropriation of this tRNA by the elongation apparatus. The chain is Methionyl-tRNA formyltransferase from Shewanella piezotolerans (strain WP3 / JCM 13877).